A 270-amino-acid polypeptide reads, in one-letter code: Glutamate 5-kinase (270 aa).

ATP is bound at residue Lys18. The substrate site is built by Ser54, Asp141, and Asn153. 173–174 (SD) provides a ligand contact to ATP.

It belongs to the glutamate 5-kinase family.

Its subcellular location is the cytoplasm. It catalyses the reaction L-glutamate + ATP = L-glutamyl 5-phosphate + ADP. The protein operates within amino-acid biosynthesis; L-proline biosynthesis; L-glutamate 5-semialdehyde from L-glutamate: step 1/2. Functionally, catalyzes the transfer of a phosphate group to glutamate to form L-glutamate 5-phosphate. This chain is Glutamate 5-kinase, found in Leifsonia xyli subsp. xyli (strain CTCB07).